Reading from the N-terminus, the 386-residue chain is Succinate--CoA ligase [ADP-forming] subunit beta (386 aa).

In terms of domain architecture, ATP-grasp spans 9-244 (KAVLRSYGVS…LDEEDSKEIE (236 aa)). ATP contacts are provided by residues Lys-46, 53–55 (GRG), Glu-99, Cys-102, and Glu-107. Positions 199 and 213 each coordinate Mg(2+). Substrate-binding positions include Asn-264 and 321–323 (GIM).

This sequence belongs to the succinate/malate CoA ligase beta subunit family. In terms of assembly, heterotetramer of two alpha and two beta subunits. Requires Mg(2+) as cofactor.

The enzyme catalyses succinate + ATP + CoA = succinyl-CoA + ADP + phosphate. It catalyses the reaction GTP + succinate + CoA = succinyl-CoA + GDP + phosphate. It functions in the pathway carbohydrate metabolism; tricarboxylic acid cycle; succinate from succinyl-CoA (ligase route): step 1/1. In terms of biological role, succinyl-CoA synthetase functions in the citric acid cycle (TCA), coupling the hydrolysis of succinyl-CoA to the synthesis of either ATP or GTP and thus represents the only step of substrate-level phosphorylation in the TCA. The beta subunit provides nucleotide specificity of the enzyme and binds the substrate succinate, while the binding sites for coenzyme A and phosphate are found in the alpha subunit. This chain is Succinate--CoA ligase [ADP-forming] subunit beta, found in Bacillus cereus (strain B4264).